Consider the following 150-residue polypeptide: Ribonuclease H (150 aa).

Residues 7-148 (ERPRVEIWTD…VDQLATRGRE (142 aa)) enclose the RNase H type-1 domain. Asp-16, Glu-54, Asp-76, and Asp-140 together coordinate Mg(2+).

It belongs to the RNase H family. Monomer. Requires Mg(2+) as cofactor.

It localises to the cytoplasm. It carries out the reaction Endonucleolytic cleavage to 5'-phosphomonoester.. In terms of biological role, endonuclease that specifically degrades the RNA of RNA-DNA hybrids. This chain is Ribonuclease H, found in Gluconobacter oxydans (strain 621H) (Gluconobacter suboxydans).